A 20-amino-acid polypeptide reads, in one-letter code: Pregnancy-associated glycoprotein 60H (20 aa).

Residue N4 is glycosylated (N-linked (GlcNAc...) asparagine).

This sequence belongs to the peptidase A1 family. Chorionic epithelium (trophectoderm) and placental cotyledons.

Its subcellular location is the secreted. The protein resides in the extracellular space. This Bison bonasus (European bison) protein is Pregnancy-associated glycoprotein 60H.